Consider the following 450-residue polypeptide: Glutathione reductase (450 aa).

Positions 14, 15, 34, 41, 42, and 50 each coordinate FAD. S14 serves as a coordination point for glutathione. A disulfide bridge connects residues C42 and C47. Y99 provides a ligand contact to glutathione. A115 serves as a coordination point for FAD. A175, I178, E181, R198, R204, and G262 together coordinate NADP(+). D303 serves as a coordination point for FAD. NADP(+) is bound at residue E309. T311 lines the FAD pocket. A glutathione-binding site is contributed by R319. Residue V342 participates in NADP(+) binding. H439 is a binding site for FAD. H439 serves as the catalytic Proton acceptor.

It belongs to the class-I pyridine nucleotide-disulfide oxidoreductase family. Homodimer. Requires FAD as cofactor.

The protein resides in the cytoplasm. It carries out the reaction 2 glutathione + NADP(+) = glutathione disulfide + NADPH + H(+). Its function is as follows. Catalyzes the reduction of glutathione disulfide (GSSG) to reduced glutathione (GSH). Constitutes the major mechanism to maintain a high GSH:GSSG ratio in the cytosol. The polypeptide is Glutathione reductase (gor) (Escherichia coli (strain K12)).